The following is a 211-amino-acid chain: C-type lectin domain family 2 member L (211 aa).

Positions 1-53 are disordered; that stretch reads MEPAREPPARARPPPPAARPAPAAPRPRSPAEAEARGPEGLLRRSGSGYEGST. The span at 10–28 shows a compositional bias: pro residues; that stretch reads RARPPPPAARPAPAAPRPR. Serine 29 bears the Phosphoserine mark. The chain crosses the membrane as a helical span at residues 66 to 86; the sequence is LLLGAIAVLLFAILVVMSILA. One can recognise a C-type lectin domain in the interval 104–206; it reads YGRKCYYFSE…CLTTRPWVCS (103 aa). 2 disulfide bridges follow: cysteine 125-cysteine 205 and cysteine 184-cysteine 197.

The protein resides in the membrane. This is C-type lectin domain family 2 member L (Clec2l) from Mus musculus (Mouse).